A 284-amino-acid polypeptide reads, in one-letter code: Tropomyosin, smooth muscle/fibroblast CTM1 (284 aa).

Positions 1 to 284 (MEAIKKKMTM…DVTLQGIGDL (284 aa)) form a coiled coil. The interval 18-38 (AIDRAEQAETDKKSAEDKATG) is disordered.

It belongs to the tropomyosin family. As to quaternary structure, homodimer. In terms of tissue distribution, predominantly expressed in body wall muscle and heart, low in intestine, ovary and larval tail muscle.

In terms of biological role, the function of tropomyosin in smooth muscle and non-muscle cells is not clear. This is Tropomyosin, smooth muscle/fibroblast CTM1 (CTM1) from Ciona intestinalis (Transparent sea squirt).